The primary structure comprises 220 residues: Putative DNA repair glycosylase MJ1434 (220 aa).

[4Fe-4S] cluster is bound by residues cysteine 202, cysteine 208, cysteine 211, and cysteine 217.

The protein belongs to the Nth/MutY family. [4Fe-4S] cluster is required as a cofactor.

The chain is Putative DNA repair glycosylase MJ1434 from Methanocaldococcus jannaschii (strain ATCC 43067 / DSM 2661 / JAL-1 / JCM 10045 / NBRC 100440) (Methanococcus jannaschii).